A 747-amino-acid chain; its full sequence is Ferrichrome outer membrane transporter/phage receptor (747 aa).

A signal peptide spans 1 to 33 (MARSKTAQPKHSLRKIAVVVATAVSGMSVYAQA). Residues 34 to 192 (AVEPKEDTIT…NMVSKRPTTE (159 aa)) are Periplasmic-facing. The TonB box motif lies at 40-47 (DTITVTAA). Positions 75–187 (PIQKVPQSIS…PGGLLNMVSK (113 aa)) constitute a TBDR plug domain. Ferrichrome contacts are provided by residues R114, Q133, and 148–149 (FY). In terms of domain architecture, TBDR beta-barrel spans 192-747 (EPLKEVQFKA…QVVATATFRF (556 aa)). Residues 193-201 (PLKEVQFKA) traverse the membrane as a beta stranded segment. Residues 202–206 (GTDSL) lie on the Extracellular side of the membrane. Residues 207–215 (FQTGFDFSD) traverse the membrane as a beta stranded segment. Residues 216 to 222 (SLDDDGV) are Periplasmic-facing. Residues 223-231 (YSYRLTGLA) traverse the membrane as a beta stranded segment. Topologically, residues 232–245 (RSANAQQKGSEEQR) are extracellular. The beta stranded transmembrane segment at 246–255 (YAIAPAFTWR) threads the bilayer. Residues 256-259 (PDDK) are Periplasmic-facing. The chain crosses the membrane as a beta stranded span at residues 260–268 (TNFTFLSYF). Residues 269-312 (QNEPETGYYGWLPKEGTVEPLPNGKRLPTDFNEGAKNNTYSRNE) lie on the Extracellular side of the membrane. Residue 277 to 279 (YGW) participates in ferrichrome binding. Residues 313–321 (KMVGYSFDH) traverse the membrane as a beta stranded segment. Over 322–326 (EFNDT) the chain is Periplasmic. A beta stranded transmembrane segment spans residues 327–335 (FTVRQNLRF). Over 336 to 387 (AENKTSQNSVYGYGVCSDPANAYSKQCAALAPADKGHYLARKYVVDDEKLQN) the chain is Extracellular. 346–348 (YGY) contacts ferrichrome. A disulfide bridge links C351 with C362. The chain crosses the membrane as a beta stranded span at residues 388-396 (FSVDTQLQS). Over 397–404 (KFATGDID) the chain is Periplasmic. The chain crosses the membrane as a beta stranded span at residues 405-413 (HTLLTGVDF). Residues 414-464 (MRMRNDINAWFGYDDSVPLLNLYNPVNTDFDFNAKDPANSGPYRILNKQKQ) lie on the Extracellular side of the membrane. Residue F424 participates in ferrichrome binding. A beta stranded membrane pass occupies residues 465 to 473 (TGVYVQDQA). Over 474 to 477 (QWDK) the chain is Periplasmic. The chain crosses the membrane as a beta stranded span at residues 478 to 486 (VLVTLGGRY). The Extracellular segment spans residues 487 to 508 (DWADQESLNRVAGTTDKRDDKQ). A beta stranded membrane pass occupies residues 509 to 517 (FTWRGGVNY). The Periplasmic segment spans residues 518-522 (LFDNG). The chain crosses the membrane as a beta stranded span at residues 523 to 531 (VTPYFSYSE). Topologically, residues 532-551 (SFEPSSQVGKDGNIFAPSKG) are extracellular. Residues 552 to 560 (KQYEVGVKY) traverse the membrane as a beta stranded segment. The Periplasmic segment spans residues 561 to 565 (VPEDR). The beta stranded transmembrane segment at 566–574 (PIVVTGAVY) threads the bilayer. Over 575 to 601 (NLTKTNNLMADPEGSFFSVEGGEIRAR) the chain is Extracellular. The beta stranded transmembrane segment at 602 to 610 (GVEIEAKAA) threads the bilayer. Residues 611 to 613 (LSA) are Periplasmic-facing. The chain crosses the membrane as a beta stranded span at residues 614–622 (SVNVVGSYT). Residues 623-645 (YTDAEYTTDTTYKGNTPAQVPKH) are Extracellular-facing. The chain crosses the membrane as a beta stranded span at residues 646–654 (MASLWADYT). The Periplasmic segment spans residues 655 to 661 (FFDGPLS). A beta stranded transmembrane segment spans residues 662–670 (GLTLGTGGR). At 671-689 (YTGSSYGDPANSFKVGSYT) the chain is on the extracellular side. Residues 690-698 (VVDALVRYD) traverse the membrane as a beta stranded segment. Residues 699–705 (LARVGMA) lie on the Periplasmic side of the membrane. The chain crosses the membrane as a beta stranded span at residues 706-714 (GSNVALHVN). Over 715–737 (NLFDREYVASCFNTYGCFWGAER) the chain is Extracellular. C725 and C731 are oxidised to a cystine. A TonB C-terminal box motif is present at residues 730 to 747 (GCFWGAERQVVATATFRF). Ferrichrome is bound at residue A735. Residues 738-746 (QVVATATFR) traverse the membrane as a beta stranded segment. Residue F747 is a topological domain, periplasmic.

Belongs to the TonB-dependent receptor family. In terms of assembly, monomer. Interacts with TonB. Interacts with Escherichia phage T5 receptor-binding protein pb5 (RBP-pb5); this interaction is necessary for the entry of the viral genome into the host cell.

The protein localises to the cell outer membrane. Binding of ferrichrome or colicin M enhances the interaction between FhuA and TonB. TonB activates FhuA through interaction with the beta-barrel. In terms of biological role, involved in the uptake of iron in complex with ferrichrome, a hydroxamate-type siderophore. Binds and transports ferrichrome-iron across the outer membrane. In addition to its role in ferrichrome-iron transport, transports the antibiotic albomycin, which is a structural analog of ferrichrome, and acts as a receptor for colicin M, microcin J25 and bacteriophages T1, T5, phi80 and UC-1. The energy source, which is required for all FhuA functions except infection by phage T5, is provided by the inner membrane TonB system. In Escherichia coli (strain K12), this protein is Ferrichrome outer membrane transporter/phage receptor.